The primary structure comprises 245 residues: uncharacterized protein (245 aa).

Residues 33 to 176 adopt a coiled-coil conformation; sequence QRAAYQQVQA…SSQRDMLTAT (144 aa).

This is an uncharacterized protein from Mycobacterium tuberculosis (strain CDC 1551 / Oshkosh).